We begin with the raw amino-acid sequence, 123 residues long: Probable cyclase otaY (123 aa).

Belongs to the aurE cyclase family.

Its pathway is mycotoxin biosynthesis. Probable cyclase; part of the gene cluster that mediates the biosynthesis of ochratoxin A (OTA), a mycotoxin composed of a chlorinated type I polyketide dihydroisocoumarin moiety linked to L-phenylalanine, and demonstrated to have nephrotoxic, immunotoxic, genotoxic, neurotoxic, and teratogenic properties. OtaY is probably involved in the polyketide cyclization. The pathway begins with the highly reducing polyketide synthase otaA that catalyzes the formation of the isocoumarin group during the initial stages of biosynthesis, starting from one acetate and 4 malonate units, to originate the characteristic pentaketide skeleton 7-methylmellein (7-MM) of the OTA molecule. The newly identified cyclase otaY might be involved in the polyketide cyclization reaction during the initial steps of the OTA biosynthesis. 7-MM is then oxidized into 7-carboxymellein (also called ochratoxin beta) by the cytochrome P450 monooxygenase otaC. The NRPS encoded by the otaB gene is involved in the linking of phenylalanine to the dihydroisocoumarin ring. The reaction catalyzed by NRPS results in the production of ochratoxin B (OTB), which is the non-chlorinated analog of OTA and which subsequently serves as the substrate of the halogenase otaD for chlorination activity to form the final molecular structure of OTA, containing a chlorine atom in the C-5 position of the molecule. This chain is Probable cyclase otaY, found in Aspergillus carbonarius (strain ITEM 5010).